A 330-amino-acid polypeptide reads, in one-letter code: o-succinylbenzoate synthase (330 aa).

K130 serves as the catalytic Proton donor. Mg(2+)-binding residues include D155, E184, and D206. The active-site Proton acceptor is K228.

This sequence belongs to the mandelate racemase/muconate lactonizing enzyme family. MenC type 1 subfamily. Monomer. It depends on a divalent metal cation as a cofactor.

The enzyme catalyses (1R,6R)-6-hydroxy-2-succinyl-cyclohexa-2,4-diene-1-carboxylate = 2-succinylbenzoate + H2O. The protein operates within quinol/quinone metabolism; 1,4-dihydroxy-2-naphthoate biosynthesis; 1,4-dihydroxy-2-naphthoate from chorismate: step 4/7. Its pathway is cofactor biosynthesis; phylloquinone biosynthesis. In terms of biological role, converts 2-succinyl-6-hydroxy-2,4-cyclohexadiene-1-carboxylate (SHCHC) to 2-succinylbenzoate (OSB). Does not show N-succinylamino acid racemase (NSAR) activity with N-succinyl-L-phenylglycine as substrate. This chain is o-succinylbenzoate synthase, found in Bdellovibrio bacteriovorus (strain ATCC 15356 / DSM 50701 / NCIMB 9529 / HD100).